The chain runs to 197 residues: Nucleoside triphosphate pyrophosphatase (197 aa).

Asp-74 acts as the Proton acceptor in catalysis.

Belongs to the Maf family. The cofactor is a divalent metal cation.

It is found in the cytoplasm. It carries out the reaction a ribonucleoside 5'-triphosphate + H2O = a ribonucleoside 5'-phosphate + diphosphate + H(+). The enzyme catalyses a 2'-deoxyribonucleoside 5'-triphosphate + H2O = a 2'-deoxyribonucleoside 5'-phosphate + diphosphate + H(+). Nucleoside triphosphate pyrophosphatase. May have a dual role in cell division arrest and in preventing the incorporation of modified nucleotides into cellular nucleic acids. In Granulibacter bethesdensis (strain ATCC BAA-1260 / CGDNIH1), this protein is Nucleoside triphosphate pyrophosphatase.